The sequence spans 217 residues: Probable transaldolase (217 aa).

The active-site Schiff-base intermediate with substrate is the K83.

It belongs to the transaldolase family. Type 3B subfamily.

The protein localises to the cytoplasm. The enzyme catalyses D-sedoheptulose 7-phosphate + D-glyceraldehyde 3-phosphate = D-erythrose 4-phosphate + beta-D-fructose 6-phosphate. It participates in carbohydrate degradation; pentose phosphate pathway; D-glyceraldehyde 3-phosphate and beta-D-fructose 6-phosphate from D-ribose 5-phosphate and D-xylulose 5-phosphate (non-oxidative stage): step 2/3. Transaldolase is important for the balance of metabolites in the pentose-phosphate pathway. This Chelativorans sp. (strain BNC1) protein is Probable transaldolase.